We begin with the raw amino-acid sequence, 115 residues long: Photosystem II reaction center Psb28 protein (115 aa).

The protein belongs to the Psb28 family. As to quaternary structure, part of the photosystem II complex.

The protein localises to the plastid. Its subcellular location is the chloroplast thylakoid membrane. The sequence is that of Photosystem II reaction center Psb28 protein from Trieres chinensis (Marine centric diatom).